The sequence spans 860 residues: Nuclear cap-binding protein complex subunit 1 (860 aa).

The region spanning 36–271 is the MIF4G domain; it reads CKDMLPDIRT…SNVKNALAND (236 aa).

Belongs to the NCBP1 family. In terms of assembly, component of the nuclear cap-binding complex (CBC).

It is found in the nucleus. Its function is as follows. Component of the cap-binding complex (CBC) involved in the nuclear export of capped U snRNAs. The CBC complex is required for efficient pre-mRNA splicing through efficient commitment complex and spliceosome formation; and involved in rRNA processing at sites A0, A1 and A2. The polypeptide is Nuclear cap-binding protein complex subunit 1 (CBC1) (Eremothecium gossypii (strain ATCC 10895 / CBS 109.51 / FGSC 9923 / NRRL Y-1056) (Yeast)).